We begin with the raw amino-acid sequence, 685 residues long: Methionine--tRNA ligase (685 aa).

The short motif at 12 to 22 (PYANGSIHLGH) is the 'HIGH' region element. The Zn(2+) site is built by Cys-143, Cys-146, Cys-156, and Cys-159. The 'KMSKS' region motif lies at 339–343 (KMSKS). Lys-342 is a binding site for ATP. A tRNA-binding domain is found at 582 to 685 (DFMKIDMRVA…AGAQPGDKVG (104 aa)).

It belongs to the class-I aminoacyl-tRNA synthetase family. MetG type 1 subfamily. Homodimer. Zn(2+) serves as cofactor.

It is found in the cytoplasm. The enzyme catalyses tRNA(Met) + L-methionine + ATP = L-methionyl-tRNA(Met) + AMP + diphosphate. Functionally, is required not only for elongation of protein synthesis but also for the initiation of all mRNA translation through initiator tRNA(fMet) aminoacylation. The chain is Methionine--tRNA ligase from Neisseria meningitidis serogroup A / serotype 4A (strain DSM 15465 / Z2491).